The following is a 571-amino-acid chain: Leucine aminopeptidase A1, chloroplastic (571 aa).

A chloroplast-targeting transit peptide spans Met-1 to Cys-53. The Mg(2+) site is built by Lys-342 and Asp-347. Lys-354 is an active-site residue. Asp-367, Asp-427, and Glu-429 together coordinate Mg(2+). The active site involves Arg-431.

It belongs to the peptidase M17 family. In terms of assembly, homohexamer (dimer of homotrimers). The cofactor is Mg(2+). In terms of tissue distribution, observed during floral development. Expressed in healthy and senescent leaves, cotyledons (emergence from seed coats), pistils, sepals, petals, stamens, and floral buds (at protein level). Present at very low levels in healthy leaves.

The protein resides in the plastid. It localises to the chloroplast. It catalyses the reaction Release of an N-terminal amino acid, Xaa-|-Yaa-, in which Xaa is preferably Leu, but may be other amino acids including Pro although not Arg or Lys, and Yaa may be Pro. Amino acid amides and methyl esters are also readily hydrolyzed, but rates on arylamides are exceedingly low.. It carries out the reaction Release of N-terminal proline from a peptide.. Its function is as follows. Catalyzes the removal of unsubstituted N-terminal amino acids from various peptides. When associated as homohexamer, catalyzes the proteolyzes of Xaa-Leu dipeptides. Possesses leucine aminopeptidase activity against the model substrate leucine-amido methyl coumarin. Presumably involved in the processing and regular turnover of intracellular proteins. Regulates wound signaling and has a role in insect defense. In terms of biological role, functions as a molecular chaperone to protect proteins from heat-induced damage. This Solanum lycopersicum (Tomato) protein is Leucine aminopeptidase A1, chloroplastic.